A 37-amino-acid chain; its full sequence is Large ribosomal subunit protein bL36c (37 aa).

This sequence belongs to the bacterial ribosomal protein bL36 family.

It is found in the plastid. The protein resides in the chloroplast. The chain is Large ribosomal subunit protein bL36c from Psilotum nudum (Whisk fern).